Reading from the N-terminus, the 247-residue chain is Transcription factor otaR1 (247 aa).

2 disordered regions span residues 1 to 48 (MEPA…ETSM) and 100 to 143 (DNAS…PLGN). Residues 23 to 47 (DESSSTGLSLGSLLSSSNDLSSETS) are compositionally biased toward low complexity. Residues 134 to 143 (ANPTSVPLGN) are compositionally biased toward polar residues. The segment at 156 to 196 (KKYHEKYKERNRVAAGKSRQKQVDLIELLQAEQREEERRRK) is basic motif. The 64-residue stretch at 156 to 219 (KKYHEKYKER…LDLKQELQHH (64 aa)) folds into the bZIP domain. The segment at 198-212 (LERELSQIHKELLDL) is leucine-zipper.

It is found in the nucleus. Functionally, transcription factor; part of the gene cluster that mediates the biosynthesis of ochratoxin A (OTA), a mycotoxin demonstrated to have nephrotoxic, immunotoxic, genotoxic, neurotoxic, and teratogenic properties. Positively regulates the expression of the cluster genes otaA, otaB, otaC and otaD, and the subsequent production of OTA. The polypeptide is Transcription factor otaR1 (Aspergillus carbonarius (strain ITEM 5010)).